The sequence spans 50 residues: Insulin (50 aa).

3 disulfide bridges follow: cysteine 7–cysteine 36, cysteine 19–cysteine 49, and cysteine 35–cysteine 40.

It belongs to the insulin family. In terms of assembly, heterodimer of a B chain and an A chain linked by two disulfide bonds.

Its subcellular location is the secreted. In terms of biological role, insulin decreases blood glucose concentration. It increases cell permeability to monosaccharides, amino acids and fatty acids. It accelerates glycolysis, the pentose phosphate cycle, and glycogen synthesis in liver. The protein is Insulin (INS) of Proechimys guairae (Guaira spiny rat).